The primary structure comprises 340 residues: N-acetyl-gamma-glutamyl-phosphate reductase (340 aa).

The active site involves cysteine 146.

Belongs to the NAGSA dehydrogenase family. Type 1 subfamily.

Its subcellular location is the cytoplasm. The catalysed reaction is N-acetyl-L-glutamate 5-semialdehyde + phosphate + NADP(+) = N-acetyl-L-glutamyl 5-phosphate + NADPH + H(+). It participates in amino-acid biosynthesis; L-arginine biosynthesis; N(2)-acetyl-L-ornithine from L-glutamate: step 3/4. Functionally, catalyzes the NADPH-dependent reduction of N-acetyl-5-glutamyl phosphate to yield N-acetyl-L-glutamate 5-semialdehyde. The sequence is that of N-acetyl-gamma-glutamyl-phosphate reductase from Rubrobacter xylanophilus (strain DSM 9941 / JCM 11954 / NBRC 16129 / PRD-1).